A 325-amino-acid polypeptide reads, in one-letter code: MSWITPDLIEILLSILKAVVILLVVVTCGAFMSFGERRLLGLFQNRYGPNRVGWGGSLQLVADMIKMFFKEDWIPKFSDRVIFTLAPMIAFTSLLLSFAIVPVSPNWVVADLNIGILFFLMMAGLAVYAVLFAGWSSNNKYSLLGAMRASAQTVSYEVFLGLSLMGVVAQAGSFNMTDIVNNQAHLWNVIPQFFGFVTFAIAGVAVCHRHPFDQPEAEQELADGYHIEYSGMKFGLFFVGEYIGIVTVSALMVTLFFGGWHGPFLPPFVWFALKTAFFMMMFILIRASLPRPRYDQVMSFGWKVCLPLTLINLLVTAAVILWQAQ.

9 consecutive transmembrane segments (helical) span residues 11 to 31 (ILLSILKAVVILLVVVTCGAF), 50 to 69 (NRVGWGGSLQLVADMIKMFF), 81 to 101 (VIFTLAPMIAFTSLLLSFAIV), 114 to 134 (IGILFFLMMAGLAVYAVLFAG), 154 to 174 (VSYEVFLGLSLMGVVAQAGSF), 186 to 206 (LWNVIPQFFGFVTFAIAGVAV), 237 to 257 (FFVGEYIGIVTVSALMVTLFF), 265 to 285 (LPPFVWFALKTAFFMMMFILI), and 304 to 324 (VCLPLTLINLLVTAAVILWQA).

This sequence belongs to the complex I subunit 1 family. As to quaternary structure, NDH-1 is composed of 13 different subunits. Subunits NuoA, H, J, K, L, M, N constitute the membrane sector of the complex.

Its subcellular location is the cell inner membrane. The enzyme catalyses a quinone + NADH + 5 H(+)(in) = a quinol + NAD(+) + 4 H(+)(out). In terms of biological role, NDH-1 shuttles electrons from NADH, via FMN and iron-sulfur (Fe-S) centers, to quinones in the respiratory chain. The immediate electron acceptor for the enzyme in this species is believed to be ubiquinone. Couples the redox reaction to proton translocation (for every two electrons transferred, four hydrogen ions are translocated across the cytoplasmic membrane), and thus conserves the redox energy in a proton gradient. This subunit may bind ubiquinone. In Salmonella agona (strain SL483), this protein is NADH-quinone oxidoreductase subunit H.